A 200-amino-acid chain; its full sequence is Peptidyl-tRNA hydrolase (200 aa).

A tRNA-binding site is contributed by tyrosine 15. Histidine 20 functions as the Proton acceptor in the catalytic mechanism. Phenylalanine 66, asparagine 68, and asparagine 114 together coordinate tRNA.

The protein belongs to the PTH family. Monomer.

The protein localises to the cytoplasm. The catalysed reaction is an N-acyl-L-alpha-aminoacyl-tRNA + H2O = an N-acyl-L-amino acid + a tRNA + H(+). Hydrolyzes ribosome-free peptidyl-tRNAs (with 1 or more amino acids incorporated), which drop off the ribosome during protein synthesis, or as a result of ribosome stalling. Functionally, catalyzes the release of premature peptidyl moieties from peptidyl-tRNA molecules trapped in stalled 50S ribosomal subunits, and thus maintains levels of free tRNAs and 50S ribosomes. The chain is Peptidyl-tRNA hydrolase from Ralstonia nicotianae (strain ATCC BAA-1114 / GMI1000) (Ralstonia solanacearum).